The primary structure comprises 425 residues: Peroxisomal membrane protein PEX14 (425 aa).

Disordered stretches follow at residues 49 to 89 (RSQG…YRNA) and 247 to 425 (DEPI…AAQS). Residues 56-76 (SSSVASQVSSYSPSASQSSVA) are compositionally biased toward low complexity. The SH3-binding motif lies at 89 to 97 (APPLPERDW). Over residues 256 to 297 (PSLTTGANSLTSESSGRSSIPHSQSVPIRTQLTTPPSDSDTS) the composition is skewed to polar residues. Composition is skewed to basic and acidic residues over residues 315–324 (DILRKEKNRT) and 333–366 (LGKDLESVAQSDPDKVEKYEGRRDLKSLERPEED).

This sequence belongs to the peroxin-14 family. In terms of assembly, interacts with PEX13 (via SH3 domain); forming the PEX13-PEX14 docking complex. Interacts with PEX5 (via WxxxF/Y motifs). Interacts with PEX20 (via WxxxF/Y motifs). Interacts with PEX3, PEX7, PEX8 and PEX17. Phosphorylated on serine or threonine residues.

It localises to the peroxisome membrane. Functionally, component of the PEX13-PEX14 docking complex, a translocon channel that specifically mediates the import of peroxisomal cargo proteins bound to PEX5 or PEX20 receptors. The PEX13-PEX14 docking complex forms a large import pore which can be opened to a diameter of about 9 nm. Mechanistically, PEX5 (or PEX20) receptor along with cargo proteins associates with the PEX14 subunit of the PEX13-PEX14 docking complex in the cytosol, leading to the insertion of the receptor into the organelle membrane with the concomitant translocation of the cargo into the peroxisome matrix. This is Peroxisomal membrane protein PEX14 from Komagataella pastoris (Yeast).